The following is a 714-amino-acid chain: Mitochondrial division protein 1 (714 aa).

Residues 240 to 298 adopt a coiled-coil conformation; it reads LNIQKNSTLSEIRDIEVEVENLRQKKEKLLGKIANIEQNQLLLEDNLKQIDDRLDFLEE. Residues 323–354 are disordered; it reads LKNDAIRNEGVTTESISSEASNLPPRRRQQLR. Residues 332-343 are compositionally biased toward polar residues; it reads GVTTESISSEAS. At Ser376 the chain carries Phosphoserine. WD repeat units lie at residues 396 to 436, 439 to 478, 500 to 539, 561 to 603, 604 to 642, 644 to 681, and 685 to 714; these read THDD…KIGE, GHLATINCMQINRDYGTLVTGGRDAALKLWNLNLAQQLYQ, AHTDEVTALSLDPSFLVSGSQDRTIRQWDLRSGKCLQTID, TQRN…RTLK, GHTDAITSLKFDSACLVTGSYDRTVRIWDLRTGLLNKFH, YSAPVLSLDLFQENAAVVVADEPSVQIYDSEKDESWSC, and GNETSVSTVKYKENYMVEGRENGDVNIWAV.

The protein belongs to the WD repeat MDV1/CAF4 family. As to quaternary structure, interacts with CAF4, DNM1 and FIS1, components of the mitochondrial fission machinery. Interacts via its N-terminal, coiled-coil extension (NTE) with FIS1, and via its WD repeats with DNM1.

The protein resides in the mitochondrion outer membrane. In terms of biological role, involved in mitochondrial fission. Has a partially redundant function to CAF4 in acting as an adapter protein, binding to FIS1 on the mitochondrial outer membrane and recruiting the dynamin-like GTPase DNM1 to form mitochondrial fission complexes. Formation of these complexes is required to promote constriction and fission of the mitochondrial compartment at a late step in mitochondrial division. The chain is Mitochondrial division protein 1 (MDV1) from Saccharomyces cerevisiae (strain ATCC 204508 / S288c) (Baker's yeast).